A 292-amino-acid polypeptide reads, in one-letter code: 11-beta-hydroxysteroid dehydrogenase 1 (292 aa).

At 2–7 the chain is on the cytoplasmic side; sequence AFMKKY. A helical; Signal-anchor for type II membrane protein membrane pass occupies residues 8 to 24; sequence LLPLLGLFLAYYYYSAN. Residues 25–292 are Lumenal-facing; it reads EEFRPEMLQG…KFDISKLVNN (268 aa). NADP(+) contacts are provided by residues 41 to 67, 92 to 93, and 119 to 121; these read GASK…TARS, TM, and NHI. 2 N-linked (GlcNAc...) asparagine glycosylation sites follow: asparagine 123 and asparagine 162. Serine 170 contacts substrate. The active-site Proton acceptor is the tyrosine 183. 183-187 provides a ligand contact to NADP(+); it reads YSASK. A glycan (N-linked (GlcNAc...) asparagine) is linked at asparagine 207. NADP(+) is bound at residue 218-222; it reads IDTDT.

Belongs to the short-chain dehydrogenases/reductases (SDR) family. Homodimer. Glycosylated. In terms of tissue distribution, expressed in the eye.

The protein localises to the endoplasmic reticulum membrane. It localises to the microsome membrane. It carries out the reaction an 11beta-hydroxysteroid + NADP(+) = an 11-oxosteroid + NADPH + H(+). The catalysed reaction is corticosterone + NADP(+) = 11-dehydrocorticosterone + NADPH + H(+). It catalyses the reaction cortisone + NADPH + H(+) = cortisol + NADP(+). The enzyme catalyses a 7beta-hydroxysteroid + NADP(+) = a 7-oxosteroid + NADPH + H(+). It carries out the reaction 7-oxocholesterol + NADPH + H(+) = 7beta-hydroxycholesterol + NADP(+). The catalysed reaction is chenodeoxycholate + NADP(+) = 7-oxolithocholate + NADPH + H(+). It catalyses the reaction 7-oxolithocholate + NADPH + H(+) = ursodeoxycholate + NADP(+). The enzyme catalyses glycochenodeoxycholate + NADP(+) = 7-oxoglycolithocholate + NADPH + H(+). It carries out the reaction taurochenodeoxycholate + NADP(+) = 7-oxotaurolithocholate + NADPH + H(+). The catalysed reaction is tauroursodeoxycholate + NADP(+) = 7-oxotaurolithocholate + NADPH + H(+). It catalyses the reaction glycoursodeoxycholate + NADP(+) = 7-oxoglycolithocholate + NADPH + H(+). The enzyme catalyses 7-oxopregnenolone + NADPH + H(+) = 7beta-hydroxypregnenolone + NADP(+). It carries out the reaction 3beta,7alpha-dihydroxyandrost-5-en-17-one + NADP(+) = 3beta-hydroxy-5-androstene-7,17-dione + NADPH + H(+). The catalysed reaction is 3beta-hydroxy-5-androstene-7,17-dione + NADPH + H(+) = 3beta,7beta-dihydroxyandrost-5-en-17-one + NADP(+). It catalyses the reaction 3beta-hydroxy-5alpha-androstane-7,17-dione + NADPH + H(+) = 3beta,7beta-dihydroxy-5alpha-androstan-17-one + NADP(+). Its pathway is steroid metabolism. Functionally, controls the reversible conversion of biologically active glucocorticoids such as cortisone to cortisol, and 11-dehydrocorticosterone to corticosterone in the presence of NADP(H). Participates in the corticosteroid receptor-mediated anti-inflammatory response, as well as metabolic and homeostatic processes. Plays a role in the secretion of aqueous humor in the eye, maintaining a normotensive, intraocular environment. Bidirectional in vitro, predominantly functions as a reductase in vivo, thereby increasing the concentration of active glucocorticoids. It has broad substrate specificity, besides glucocorticoids, it accepts other steroid and sterol substrates. It has broad substrate specificity, besides glucocorticoids, it accepts other steroid and sterol substrates. Interconverts 7-oxo- and 7-hydroxy-neurosteroids such as 7-oxopregnenolone and 7beta-hydroxypregnenolone, 7-oxodehydroepiandrosterone (3beta-hydroxy-5-androstene-7,17-dione) and 7beta-hydroxydehydroepiandrosterone (3beta,7beta-dihydroxyandrost-5-en-17-one), among others. Catalyzes the stereo-specific conversion of the major dietary oxysterol, 7-ketocholesterol (7-oxocholesterol), into the more polar 7-beta-hydroxycholesterol metabolite. 7-oxocholesterol is one of the most important oxysterols, it participates in several events such as induction of apoptosis, accumulation in atherosclerotic lesions, lipid peroxidation, and induction of foam cell formation. Mediates the 7-oxo reduction of 7-oxolithocholate mainly to chenodeoxycholate, and to a lesser extent to ursodeoxycholate, both in its free form and when conjugated to glycine or taurine, providing a link between glucocorticoid activation and bile acid metabolism. Catalyzes the synthesis of 7-beta-25-dihydroxycholesterol from 7-oxo-25-hydroxycholesterol in vitro, which acts as a ligand for the G-protein-coupled receptor (GPCR) Epstein-Barr virus-induced gene 2 (EBI2) and may thereby regulate immune cell migration. In Oryctolagus cuniculus (Rabbit), this protein is 11-beta-hydroxysteroid dehydrogenase 1.